The primary structure comprises 301 residues: Sulfate adenylyltransferase subunit 2 (301 aa).

Positions 279–301 (RQGRLIDHDQDGSMEKKKQEGYF) are disordered.

This sequence belongs to the PAPS reductase family. CysD subfamily. As to quaternary structure, heterodimer composed of CysD, the smaller subunit, and CysN.

The enzyme catalyses sulfate + ATP + H(+) = adenosine 5'-phosphosulfate + diphosphate. It participates in sulfur metabolism; hydrogen sulfide biosynthesis; sulfite from sulfate: step 1/3. Its function is as follows. With CysN forms the ATP sulfurylase (ATPS) that catalyzes the adenylation of sulfate producing adenosine 5'-phosphosulfate (APS) and diphosphate, the first enzymatic step in sulfur assimilation pathway. APS synthesis involves the formation of a high-energy phosphoric-sulfuric acid anhydride bond driven by GTP hydrolysis by CysN coupled to ATP hydrolysis by CysD. This is Sulfate adenylyltransferase subunit 2 from Geotalea uraniireducens (strain Rf4) (Geobacter uraniireducens).